Here is a 361-residue protein sequence, read N- to C-terminus: Phosphoserine aminotransferase (361 aa).

L-glutamate-binding residues include Ser-9 and Arg-42. Pyridoxal 5'-phosphate-binding positions include 76 to 77 (AR), Trp-102, Thr-153, Asp-173, and Gln-196. Lys-197 carries the N6-(pyridoxal phosphate)lysine modification. Residue 238 to 239 (NT) participates in pyridoxal 5'-phosphate binding.

The protein belongs to the class-V pyridoxal-phosphate-dependent aminotransferase family. SerC subfamily. Homodimer. It depends on pyridoxal 5'-phosphate as a cofactor.

It localises to the cytoplasm. The enzyme catalyses O-phospho-L-serine + 2-oxoglutarate = 3-phosphooxypyruvate + L-glutamate. It catalyses the reaction 4-(phosphooxy)-L-threonine + 2-oxoglutarate = (R)-3-hydroxy-2-oxo-4-phosphooxybutanoate + L-glutamate. It functions in the pathway amino-acid biosynthesis; L-serine biosynthesis; L-serine from 3-phospho-D-glycerate: step 2/3. The protein operates within cofactor biosynthesis; pyridoxine 5'-phosphate biosynthesis; pyridoxine 5'-phosphate from D-erythrose 4-phosphate: step 3/5. In terms of biological role, catalyzes the reversible conversion of 3-phosphohydroxypyruvate to phosphoserine and of 3-hydroxy-2-oxo-4-phosphonooxybutanoate to phosphohydroxythreonine. The polypeptide is Phosphoserine aminotransferase (Serratia proteamaculans (strain 568)).